A 230-amino-acid chain; its full sequence is SPbeta prophage-derived putative HNH endonuclease YoqL (230 aa).

Positions 136–188 constitute an HNH domain; it reads CSYCGLKIEDHKILFKGTYIQSDFHKEHVDHKGANDISNCIPACKSCNSSKHD.

It belongs to the HNH nuclease family.

In Bacillus subtilis (strain 168), this protein is SPbeta prophage-derived putative HNH endonuclease YoqL (yoqL).